The following is a 505-amino-acid chain: MTAPVYDYSDDVMDFDEVLEHFDPVMGMEVHVELATKTKMFSTSSAEFGDAPNSNVDPCSLGLPGALPVVNKLGVEWAIKIGLALNCEIAPKSRFARKNYFYPDQPKNYQISQYDEPIAYDGYLDVVLEDGTEWRVEIERAHMEEDTGKLTHLGGADGRIHGATASLVDCNRAGVPLIEIVTKPIEGAGERAPEVAKAYVSALRDLVKALGVSDARMDQGSMRVDSNLSLRPVGTTEYGTRTETKNINSLKSVEQAVRFEMQRQAACLVNDVEIVQETRHYQETDGTTSKGRPKETMADYRYFNDPDLPPVLAPAEWVEEIRATLPEMPWIRRARIQEEWGLKDEEMRDLVNAGALDLVVDTVEAGAKPDEARSWWVSYLAGKANEQGVELSGLDITPTQVARVASLVNEGKLTTKLARQAVDGVLAGEGDVDEVVAARGLEVVRDDGAIEAAVDEALAANPDIVEKYRAGNKKVTGAIVGAVMKATKGKADPAQVNQLIAKKLS.

Belongs to the GatB/GatE family. GatB subfamily. Heterotrimer of A, B and C subunits.

It catalyses the reaction L-glutamyl-tRNA(Gln) + L-glutamine + ATP + H2O = L-glutaminyl-tRNA(Gln) + L-glutamate + ADP + phosphate + H(+). The catalysed reaction is L-aspartyl-tRNA(Asn) + L-glutamine + ATP + H2O = L-asparaginyl-tRNA(Asn) + L-glutamate + ADP + phosphate + 2 H(+). In terms of biological role, allows the formation of correctly charged Asn-tRNA(Asn) or Gln-tRNA(Gln) through the transamidation of misacylated Asp-tRNA(Asn) or Glu-tRNA(Gln) in organisms which lack either or both of asparaginyl-tRNA or glutaminyl-tRNA synthetases. The reaction takes place in the presence of glutamine and ATP through an activated phospho-Asp-tRNA(Asn) or phospho-Glu-tRNA(Gln). In Corynebacterium jeikeium (strain K411), this protein is Aspartyl/glutamyl-tRNA(Asn/Gln) amidotransferase subunit B.